Consider the following 153-residue polypeptide: Actin-related protein 2/3 complex subunit 5-like protein (153 aa).

Serine 64 carries the post-translational modification Phosphoserine.

It belongs to the ARPC5 family. In terms of assembly, may be a component of the Arp2/3 complex in which it may replace ARPC5.

It localises to the cytoplasm. It is found in the cytoskeleton. May function as component of the Arp2/3 complex which is involved in regulation of actin polymerization and together with an activating nucleation-promoting factor (NPF) mediates the formation of branched actin networks. The chain is Actin-related protein 2/3 complex subunit 5-like protein (Arpc5l) from Rattus norvegicus (Rat).